The primary structure comprises 729 residues: DNA topoisomerase 3 (729 aa).

The 134-residue stretch at 3 to 136 (KSVVIAEKPS…IKRLWISSVT (134 aa)) folds into the Toprim domain. Residues Glu-9 and Asp-105 each coordinate Mg(2+). In terms of domain architecture, Topo IA-type catalytic spans 153–594 (YDNLYASAVA…EMKNYTKEIV (442 aa)). Residues 187-192 (NCGRVQ) form an interaction with DNA region. The active-site O-(5'-phospho-DNA)-tyrosine intermediate is Tyr-310. Over residues 686–713 (ERRKKESGNKADKRDVQKYMKQQKKEEE) the composition is skewed to basic and acidic residues. The interval 686-718 (ERRKKESGNKADKRDVQKYMKQQKKEEEPLNNP) is disordered.

It belongs to the type IA topoisomerase family. Requires Mg(2+) as cofactor.

It catalyses the reaction ATP-independent breakage of single-stranded DNA, followed by passage and rejoining.. Its function is as follows. Releases the supercoiling and torsional tension of DNA, which is introduced during the DNA replication and transcription, by transiently cleaving and rejoining one strand of the DNA duplex. Introduces a single-strand break via transesterification at a target site in duplex DNA. The scissile phosphodiester is attacked by the catalytic tyrosine of the enzyme, resulting in the formation of a DNA-(5'-phosphotyrosyl)-enzyme intermediate and the expulsion of a 3'-OH DNA strand. The free DNA strand then undergoes passage around the unbroken strand, thus removing DNA supercoils. Finally, in the religation step, the DNA 3'-OH attacks the covalent intermediate to expel the active-site tyrosine and restore the DNA phosphodiester backbone. This Bacillus cereus (strain ZK / E33L) protein is DNA topoisomerase 3.